The sequence spans 508 residues: Photosystem II CP47 reaction center protein (508 aa).

The next 6 membrane-spanning stretches (helical) occupy residues 21–36, 101–115, 140–156, 203–218, 237–252, and 457–472; these read SVHIMHTALVAGWAGS, IVFSGLCFLAAIWHW, GIHLFLSGVACFGFGAF, IAAGTLGILAGLFHLS, VLSSSIAAVFFAAFVV, and SFALLFFFGHIWHGAR.

The protein belongs to the PsbB/PsbC family. PsbB subfamily. As to quaternary structure, PSII is composed of 1 copy each of membrane proteins PsbA, PsbB, PsbC, PsbD, PsbE, PsbF, PsbH, PsbI, PsbJ, PsbK, PsbL, PsbM, PsbT, PsbX, PsbY, PsbZ, Psb30/Ycf12, at least 3 peripheral proteins of the oxygen-evolving complex and a large number of cofactors. It forms dimeric complexes. The cofactor is Binds multiple chlorophylls. PSII binds additional chlorophylls, carotenoids and specific lipids..

The protein resides in the plastid. It is found in the chloroplast thylakoid membrane. Functionally, one of the components of the core complex of photosystem II (PSII). It binds chlorophyll and helps catalyze the primary light-induced photochemical processes of PSII. PSII is a light-driven water:plastoquinone oxidoreductase, using light energy to abstract electrons from H(2)O, generating O(2) and a proton gradient subsequently used for ATP formation. In Nasturtium officinale (Watercress), this protein is Photosystem II CP47 reaction center protein.